The primary structure comprises 590 residues: Putative ABC transporter ATP-binding protein MM_3016 (590 aa).

2 consecutive ABC transporter domains span residues 11–251 (VRFE…KLGI) and 317–550 (VRIE…AGLI). ATP-binding positions include 45-52 (GPSGCGKS) and 350-357 (GHNGAGKT).

The protein belongs to the ABC transporter superfamily.

The protein resides in the cell membrane. Its function is as follows. Probably part of an ABC transporter complex. Responsible for energy coupling to the transport system. This is Putative ABC transporter ATP-binding protein MM_3016 from Methanosarcina mazei (strain ATCC BAA-159 / DSM 3647 / Goe1 / Go1 / JCM 11833 / OCM 88) (Methanosarcina frisia).